The following is a 456-amino-acid chain: UDP-N-acetylmuramate--L-alanine ligase (456 aa).

Position 118–124 (Gly118–Thr124) interacts with ATP.

This sequence belongs to the MurCDEF family.

It localises to the cytoplasm. It catalyses the reaction UDP-N-acetyl-alpha-D-muramate + L-alanine + ATP = UDP-N-acetyl-alpha-D-muramoyl-L-alanine + ADP + phosphate + H(+). It functions in the pathway cell wall biogenesis; peptidoglycan biosynthesis. In terms of biological role, cell wall formation. The polypeptide is UDP-N-acetylmuramate--L-alanine ligase (Paenarthrobacter aurescens (strain TC1)).